The sequence spans 98 residues: Aspartyl/glutamyl-tRNA(Asn/Gln) amidotransferase subunit C (98 aa).

This sequence belongs to the GatC family. As to quaternary structure, heterotrimer of A, B and C subunits.

The catalysed reaction is L-glutamyl-tRNA(Gln) + L-glutamine + ATP + H2O = L-glutaminyl-tRNA(Gln) + L-glutamate + ADP + phosphate + H(+). It catalyses the reaction L-aspartyl-tRNA(Asn) + L-glutamine + ATP + H2O = L-asparaginyl-tRNA(Asn) + L-glutamate + ADP + phosphate + 2 H(+). Functionally, allows the formation of correctly charged Asn-tRNA(Asn) or Gln-tRNA(Gln) through the transamidation of misacylated Asp-tRNA(Asn) or Glu-tRNA(Gln) in organisms which lack either or both of asparaginyl-tRNA or glutaminyl-tRNA synthetases. The reaction takes place in the presence of glutamine and ATP through an activated phospho-Asp-tRNA(Asn) or phospho-Glu-tRNA(Gln). In Micrococcus luteus (strain ATCC 4698 / DSM 20030 / JCM 1464 / CCM 169 / CCUG 5858 / IAM 1056 / NBRC 3333 / NCIMB 9278 / NCTC 2665 / VKM Ac-2230) (Micrococcus lysodeikticus), this protein is Aspartyl/glutamyl-tRNA(Asn/Gln) amidotransferase subunit C.